A 143-amino-acid polypeptide reads, in one-letter code: Large ribosomal subunit protein uL11 (143 aa).

This sequence belongs to the universal ribosomal protein uL11 family. Part of the ribosomal stalk of the 50S ribosomal subunit. Interacts with L10 and the large rRNA to form the base of the stalk. L10 forms an elongated spine to which L12 dimers bind in a sequential fashion forming a multimeric L10(L12)X complex. One or more lysine residues are methylated.

In terms of biological role, forms part of the ribosomal stalk which helps the ribosome interact with GTP-bound translation factors. The chain is Large ribosomal subunit protein uL11 from Verminephrobacter eiseniae (strain EF01-2).